The sequence spans 395 residues: Mevalonate kinase (395 aa).

ATP-binding positions include K13, N55, N104, S135, and 140–146 (GAGLGSS). The active-site Proton donor is S146. Residues S146 and E193 each coordinate Mg(2+). The active-site Proton acceptor is D204.

Belongs to the GHMP kinase family. Mevalonate kinase subfamily. In terms of assembly, homodimer. Requires Mg(2+) as cofactor.

The protein resides in the cytoplasm. The protein localises to the peroxisome. It carries out the reaction (R)-mevalonate + ATP = (R)-5-phosphomevalonate + ADP + H(+). It participates in isoprenoid biosynthesis; isopentenyl diphosphate biosynthesis via mevalonate pathway; isopentenyl diphosphate from (R)-mevalonate: step 1/3. With respect to regulation, farnesyl pyrophosphate and geranyl pyrophosphate inhibit mevalonate kinase activity by binding competitively at the ATP-binding sites. Its function is as follows. Catalyzes the phosphorylation of mevalonate to mevalonate 5-phosphate, a key step in isoprenoid and cholesterol biosynthesis. The sequence is that of Mevalonate kinase from Mus musculus (Mouse).